Reading from the N-terminus, the 403-residue chain is Large ribosomal subunit protein uL3 (403 aa).

The segment at 1 to 38 is disordered; the sequence is MSHRKFSAPRHGSLGFLPRKRSSRHRGKVKSFPKDDSS. Serine 13 is modified (phosphoserine). Basic residues predominate over residues 18 to 31; that stretch reads PRKRSSRHRGKVKS. Residue lysine 39 forms a Glycyl lysine isopeptide (Lys-Gly) (interchain with G-Cter in SUMO2) linkage. Lysine 136 carries the N6-acetyllysine modification. Residues lysine 224 and lysine 226 each participate in a glycyl lysine isopeptide (Lys-Gly) (interchain with G-Cter in SUMO2) cross-link. Position 245 is a tele-methylhistidine (histidine 245). Lysine 286 and lysine 294 each carry N6-acetyllysine; alternate. Lysine 286 participates in a covalent cross-link: Glycyl lysine isopeptide (Lys-Gly) (interchain with G-Cter in SUMO2); alternate. Lysine 294 participates in a covalent cross-link: Glycyl lysine isopeptide (Lys-Gly) (interchain with G-Cter in SUMO1); alternate. The residue at position 304 (serine 304) is a Phosphoserine. Position 366 is an N6-acetyllysine; alternate (lysine 366). Residue lysine 366 forms a Glycyl lysine isopeptide (Lys-Gly) (interchain with G-Cter in SUMO2); alternate linkage. Lysine 373 carries the post-translational modification N6-acetyllysine. Residues lysine 386, lysine 393, and lysine 399 each participate in a glycyl lysine isopeptide (Lys-Gly) (interchain with G-Cter in SUMO2) cross-link.

Belongs to the universal ribosomal protein uL3 family. As to quaternary structure, component of the large ribosomal subunit. Interacts with DHX33. Constitutively monomethylated at His-245 by METTL18. Methylation at His-245 regulates translation elongation by slowing ribosome traversal on tyrosine codons: slower elongation provides enough time for proper folding of synthesized proteins and prevents cellular aggregation of tyrosine-rich proteins It is not required for incorporation of RPL3 into ribosomes.

The protein resides in the nucleus. Its subcellular location is the nucleolus. The protein localises to the cytoplasm. Component of the large ribosomal subunit. The ribosome is a large ribonucleoprotein complex responsible for the synthesis of proteins in the cell. This is Large ribosomal subunit protein uL3 (RPL3) from Bos taurus (Bovine).